A 270-amino-acid polypeptide reads, in one-letter code: uncharacterized protein (270 aa).

Basic and acidic residues predominate over residues 1–10 (MFGLKVKDAT). Disordered stretches follow at residues 1–115 (MFGL…PTPW) and 215–236 (QTGF…QGEQ). Low complexity-rich tracts occupy residues 26–41 (SSSS…TQRG) and 98–113 (GTSP…GTPT).

It belongs to the adhesin P1 family.

This is an uncharacterized protein from Mycoplasma pneumoniae (strain ATCC 29342 / M129 / Subtype 1) (Mycoplasmoides pneumoniae).